A 361-amino-acid chain; its full sequence is Peptide chain release factor 1 (361 aa).

At Gln238 the chain carries N5-methylglutamine.

Belongs to the prokaryotic/mitochondrial release factor family. Methylated by PrmC. Methylation increases the termination efficiency of RF1.

It localises to the cytoplasm. Its function is as follows. Peptide chain release factor 1 directs the termination of translation in response to the peptide chain termination codons UAG and UAA. The protein is Peptide chain release factor 1 of Mesomycoplasma hyopneumoniae (strain 232) (Mycoplasma hyopneumoniae).